The chain runs to 100 residues: Small ribosomal subunit protein uS14c (100 aa).

The protein belongs to the universal ribosomal protein uS14 family. As to quaternary structure, part of the 30S ribosomal subunit.

The protein localises to the plastid. The protein resides in the chloroplast. Its function is as follows. Binds 16S rRNA, required for the assembly of 30S particles. This Cyanidioschyzon merolae (strain NIES-3377 / 10D) (Unicellular red alga) protein is Small ribosomal subunit protein uS14c.